We begin with the raw amino-acid sequence, 226 residues long: Phosphate propanoyltransferase (226 aa).

CoA is bound at residue 44 to 46 (VSN). 2 residues coordinate Zn(2+): His-48 and His-50. Positions 72, 90, and 97 each coordinate CoA. Position 103 (Arg-103) interacts with phosphate. Zn(2+) is bound at residue Glu-109. Phe-116 provides a ligand contact to CoA. His-157, His-159, and His-204 together coordinate Zn(2+). CoA is bound at residue Asn-211.

Belongs to the PduL family. Full-length protein forms large oligomers. Homodimer, when purified in the absence of the encapsulation peptide (EP, residues 1-47). The EP may influence oligomerization. It depends on Zn(2+) as a cofactor.

It localises to the bacterial microcompartment. The enzyme catalyses propanoyl-CoA + phosphate = propanoyl phosphate + CoA. It participates in polyol metabolism; 1,2-propanediol degradation. In terms of biological role, involved in 1,2-propanediol (1,2-PD) utilization within the bacterial microcompartment (BMC) dedicated to 1,2-PD degradation by catalyzing the conversion of propanoyl-CoA to propanoyl-phosphate. CoA is regenerated within the pdu BMC (for use by PduP) via this enzyme, although there must also be cofactor transport across the BMC. Directly targeted to the BMC. Phosphate is probably the first substrate to bind in the forward direction. CoA is probably the first substrate to bind in the reverse direction, and might bind to the enzyme as the BMC assembles, ensuring cofactor encapsulation. In Rhodopseudomonas palustris (strain BisB18), this protein is Phosphate propanoyltransferase.